We begin with the raw amino-acid sequence, 495 residues long: Cytochrome P450 monooxygenase FrzC (495 aa).

The chain crosses the membrane as a helical span at residues 8 to 28 (GLVVGLWVTYHILLGTYNVFF). Heme is bound at residue Cys-437.

This sequence belongs to the cytochrome P450 family. The cofactor is heme.

It localises to the membrane. The enzyme catalyses (S,S)-2,5-di-(p-hydroxybenzyl)piperazine + reduced [NADPH--hemoprotein reductase] + O2 = (1S,4S)-4-[(4-hydroxyphenyl)methyl]-2,5-diazaspiro[bicyclo[3.2.1]octane-6,1'-cyclohexane]-2',5'-dien-4'-one + oxidized [NADPH--hemoprotein reductase] + 2 H2O + H(+). It functions in the pathway secondary metabolite biosynthesis. Functionally, cytochrome P450 monooxygenase; part of the gene cluster that mediates the biosynthesis of the alkaloid (-)-FR901483, a potent immunosuppressant that shows efficacy in animal models and a probable inhibitor of purine nucleotide biosynthesis by targeting phosphoribosylpyrophosphate amidotransferase (PPAT). Within the pathway, FrzC catalyzes the coupling between N10 and C1' to produce a 1,4-diazabicyclo[3.2.1]octane spiro-fused to a 2,5-cyclohexadienone. FrzC probably first catalyzes homolysis of the N-H bond to generate the N10 radical which is followed by an O-H abstraction to give the phenolic radical which can be delocalized to C1'. Radical coupling between N10 and C1' then forms. The biosynthesis of (-)-FR901483 starts with the condensation of two L-tyrosines to yield (S,S)-dityrosyl-piperazine. This process occurs in 3 steps with the non-canonical nonribosomal peptide synthetase FrzA catalyzing the reduction of L-tyrosine into L-tyrosinal, the spontaneous condensation of 2 L-tyrosinal units, and the subsequent reduction by the NmrA-like family domain-containing oxidoreductase FrzB. The cytochrome P450 monooxygenase FrzC then performs coupling between N10 and C1' to morph the piperazine into a 1,4-diazabicyclo[3.2.1]octane spiro-fused to a 2,5-cyclohexadienone. The dienone portion is further reduced to cyclohexanone by the flavin-dependent reductase FrzD. The methyltranserases (MTs) FrzE and FrzF are then involved in the methylation at the C10' amine and the C4 phenolic oxygen, respectively. The order of the two MTs appear to be interchangeable. Cleavage of the C9-N10' bond by the dioxygenase FrzG then leads to formation of a conjugated iminium. In addition to the oxidation of C9, an additional dehydrogenation between C7 and C8 can occur to give a likely shunt product. The next biosynthetic step is the intramolecular aldol condensation catalyzed by the newly identified aldolase FrzH to yield an aza-tricyclic product with the formation of a C9-C3' bond. The short-chain dehydrogenase/reductase FrzI then produces dephospho-(-)-FR901483 that is phosphorylated at C4'-OH into (-)-FR901483 by the phosphotransferase FrzJ. This Cladobotryum sp protein is Cytochrome P450 monooxygenase FrzC.